A 1504-amino-acid polypeptide reads, in one-letter code: Nischarin (1504 aa).

Ala-2 bears the N-acetylalanine mark. The interval 2–133 is necessary for binding to phosphoinositide-3-P; not sufficient for targeting to endosomes; the sequence is ATARTFGPER…GITAALAEEL (132 aa). Positions 11–121 constitute a PX domain; the sequence is REAEPAKEAR…AHFLHFHFYE (111 aa). The segment at 120 to 695 is necessary for homooligomerization and targeting to endosomes; it reads YEINGITAAL…ERLALEWALG (576 aa). The tract at residues 245-869 is interaction with PAK1; that stretch reads LSVRFSATSM…LVYSDKRMVQ (625 aa). 6 LRR repeats span residues 288 to 309, 311 to 332, 333 to 354, 356 to 377, 378 to 399, and 403 to 424; these read ALTT…VKLI, KIEF…QHLY, NLVH…HTKL, NIKT…HKLY, SLVN…RSIG, and CLEH…RTKV. Residues 463–478 show a composition bias toward basic and acidic residues; that stretch reads KSKLSNPEKKGGEDSR. 4 disordered regions span residues 463–501, 524–547, 554–573, and 628–687; these read KSKL…SASL, SSTD…LESI, SDDL…EHAE, and REEG…EEER. Ser-541, Ser-543, and Ser-546 each carry phosphoserine. The stretch at 634–695 forms a coiled coil; it reads EQGEEEDEEE…ERLALEWALG (62 aa). Composition is skewed to acidic residues over residues 635 to 649 and 661 to 685; these read QGEE…EEDV and DVEE…EAEE. Residues 660–869 form an interaction with LIMK region; it reads PDVEEEEGGG…LVYSDKRMVQ (210 aa). The tract at residues 709–807 is interaction with ITGA5; sequence KVLWCFLIHV…ANLHEFHADL (99 aa). Positions 1016 to 1104 are disordered; that stretch reads TPGTGGSPQG…PAPPPAEAPA (89 aa). Ser-1022 bears the Phosphoserine mark. Over residues 1032 to 1043 the composition is skewed to basic and acidic residues; the sequence is PAERRASNDQRP. A compositionally biased stretch (low complexity) spans 1063 to 1078; sequence PAAASASGPAKTPAPA. The residue at position 1282 (Thr-1282) is a Phosphothreonine. Ser-1284 carries the post-translational modification Phosphoserine.

Homooligomer. Interacts with GRB2. Interacts with PIK3R1; probably associates with the PI3-kinase complex. Interacts with IRS4. Found in a complex with ITGA5 and PAK1. Found in a complex with LIMK1 and PAK1. Interacts with ITGA5 (via cytoplasmic domain); this interaction is direct. Interacts with PAK1 (via kinase domain); this interaction is direct and is increased upon activation of PAK1. Interacts with LIMK1 (via PDZ and kinase domain); this interaction is direct. Interacts with LIMK2; this interaction depends on LIMK2 activity. Interacts with RAC1 (activated state). Interacts with STK11; this interaction may increase STK11 activity. Isoform 1, isoform 3 and isoform 4 are expressed in brain. Isoform 1 is expressed in endocrine tissues.

It localises to the cell membrane. Its subcellular location is the cytoplasm. The protein resides in the early endosome. The protein localises to the recycling endosome. Acts either as the functional imidazoline-1 receptor (I1R) candidate or as a membrane-associated mediator of the I1R signaling. Binds numerous imidazoline ligands that induces initiation of cell-signaling cascades triggering to cell survival, growth and migration. Its activation by the agonist rilmenidine induces an increase in phosphorylation of mitogen-activated protein kinases MAPK1 and MAPK3 in rostral ventrolateral medulla (RVLM) neurons that exhibited rilmenidine-evoked hypotension. Blocking its activation with efaroxan abolished rilmenidine-induced mitogen-activated protein kinase phosphorylation in RVLM neurons. Acts as a modulator of Rac-regulated signal transduction pathways. Suppresses Rac1-stimulated cell migration by interacting with PAK1 and inhibiting its kinase activity. Also blocks Pak-independent Rac signaling by interacting with RAC1 and inhibiting Rac1-stimulated NF-kB response element and cyclin D1 promoter activation. Also inhibits LIMK1 kinase activity by reducing LIMK1 'Tyr-508' phosphorylation. Inhibits Rac-induced cell migration and invasion in breast and colon epithelial cells. Inhibits lamellipodia formation, when overexpressed. Plays a role in protection against apoptosis. Involved in association with IRS4 in the enhancement of insulin activation of MAPK1 and MAPK3. When overexpressed, induces a redistribution of cell surface ITGA5 integrin to intracellular endosomal structures. The chain is Nischarin (NISCH) from Homo sapiens (Human).